The sequence spans 56 residues: Large ribosomal subunit protein bL33 (56 aa).

This sequence belongs to the bacterial ribosomal protein bL33 family.

The chain is Large ribosomal subunit protein bL33 from Rickettsia africae (strain ESF-5).